We begin with the raw amino-acid sequence, 359 residues long: Lactosylceramide 4-alpha-galactosyltransferase (359 aa).

Over 1–30 the chain is Cytoplasmic; that stretch reads MGISCSHLEETMSKPPDCLLRMLRGTPRQR. The chain crosses the membrane as a helical; Signal-anchor for type II membrane protein span at residues 31 to 51; that stretch reads VFTFFIISFKFMFLISILIYW. Residues 52–359 are Lumenal-facing; sequence HTVGAPKDQR…TTHRAMKMYL (308 aa). The DXD motif signature appears at 198–200; the sequence is DTD. Asparagine 209 and asparagine 315 each carry an N-linked (GlcNAc...) asparagine glycan.

It belongs to the glycosyltransferase 32 family.

The protein localises to the golgi apparatus membrane. It carries out the reaction a beta-D-Gal-(1-&gt;4)-beta-D-Glc-(1&lt;-&gt;1)-Cer(d18:1(4E)) + UDP-alpha-D-galactose = a globoside Gb3Cer (d18:1(4E)) + UDP + H(+). It catalyses the reaction a beta-D-Gal-(1&lt;-&gt;1')-ceramide + UDP-alpha-D-galactose = alpha-D-Gal-(1-&gt;4)-beta-D-Gal-(1&lt;-&gt;1')-Cer + UDP + H(+). The protein operates within glycolipid biosynthesis. Catalyzes the transfer of galactose from UDP-alpha-D-galactose to lactosylceramide/beta-D-galactosyl-(1-&gt;4)-beta-D-glucosyl-(1&lt;-&gt;1)-ceramide(d18:1(4E)) to produce globotriaosylceramide/globoside Gb3Cer (d18:1(4E)). Also able to transfer galactose to galactosylceramide/beta-D-Gal-(1&lt;-&gt;1')-Cer. Globoside Gb3Cer is a glycosphingolipid of the globo serie, one of the major types of neutral root structures of glycosphingolipids, that constitute a significant portion of mammalian cell membranes. The chain is Lactosylceramide 4-alpha-galactosyltransferase from Mus musculus (Mouse).